Consider the following 510-residue polypeptide: DNA-directed RNA polymerase I subunit RPA34 (510 aa).

Met-1 carries the post-translational modification N-acetylmethionine. The segment at 1–31 (MEEPQAGDAARFSCPPNFTAKPPASESPRFS) is disordered. Residue Ser-27 is modified to Phosphoserine. Residue Tyr-80 is modified to Phosphotyrosine. The disordered stretch occupies residues 120–143 (GPQQSLSGSPLQPIPASPPPQIPP). Ser-128, Ser-136, Ser-172, and Ser-205 each carry phosphoserine. Residues 131–143 (QPIPASPPPQIPP) show a composition bias toward pro residues. Residues 203–510 (LGSPEMDVRK…KRKQQQQQPV (308 aa)) are disordered. Residues 258-270 (GKETFEPEDKTVK) show a composition bias toward basic and acidic residues. A Glycyl lysine isopeptide (Lys-Gly) (interchain with G-Cter in SUMO1); alternate cross-link involves residue Lys-270. Lys-270 is covalently cross-linked (Glycyl lysine isopeptide (Lys-Gly) (interchain with G-Cter in SUMO2); alternate). Ser-285 is subject to Phosphoserine. Thr-287 carries the post-translational modification Phosphothreonine. Position 309 is a phosphoserine (Ser-309). Lys-314 participates in a covalent cross-link: Glycyl lysine isopeptide (Lys-Gly) (interchain with G-Cter in SUMO1); alternate. Lys-314 is covalently cross-linked (Glycyl lysine isopeptide (Lys-Gly) (interchain with G-Cter in SUMO2); alternate). 2 stretches are compositionally biased toward low complexity: residues 372-382 (AKPQAQAALAA) and 394-407 (DATV…VGPE). Residues 421 to 430 (TKKKKKKKER) show a composition bias toward basic residues. Low complexity predominate over residues 436 to 452 (EPIQPLEPELPGEGQPE). Ser-490 carries the phosphoserine modification.

The protein belongs to the eukaryotic RPA34 RNA polymerase subunit family. Component of the RNA polymerase I (Pol I) complex consisting of 13 subunits: a ten-subunit catalytic core composed of POLR1A/RPA1, POLR1B/RPA2, POLR1C/RPAC1, POLR1D/RPAC2, POLR1H/RPA12, POLR2E/RPABC1, POLR2F/RPABC2, POLR2H/RPABC3, POLR2K/RPABC4 and POLR2L/RPABC5; a mobile stalk subunit POLR1F/RPA43 protruding from the core and additional subunits homologous to general transcription factors POLR1E/RPA49 and POLR1G/RPA34. Forms a heterodimer with POLR1E/RPA49. Part of Pol I pre-initiation complex (PIC), in which Pol I core assembles with RRN3 and promoter-bound UTBF and SL1/TIF-IB complex. Interacts with TAF1A thereby associates with the SL1/TIF-IB complex. Interacts with UBTF. Interacts with POLR1E/PRAF1 through its N-terminal region. In terms of assembly, interacts with CD3E. In terms of processing, undergoes tyrosine phosphorylation upon T-cell receptor (TCR) stimulation. This phosphorylation has not been confirmed by other groups. Phosphorylated on tyrosine residues in initiation-competent Pol I-beta complexes but not in Pol I-alpha complexes.

It is found in the nucleus. It localises to the nucleolus. The protein localises to the chromosome. Its function is as follows. Component of RNA polymerase I (Pol I), a DNA-dependent RNA polymerase which synthesizes ribosomal RNA precursors using the four ribonucleoside triphosphates as substrates. Involved in UBTF-activated transcription, presumably at a step following PIC formation. Has been described as a component of preformed T-cell receptor (TCR) complex. The protein is DNA-directed RNA polymerase I subunit RPA34 of Homo sapiens (Human).